Consider the following 180-residue polypeptide: ATP-dependent protease subunit HslV (180 aa).

Thr-6 is a catalytic residue. Residues Ala-164, Cys-167, and Thr-170 each coordinate Na(+).

This sequence belongs to the peptidase T1B family. HslV subfamily. As to quaternary structure, a double ring-shaped homohexamer of HslV is capped on each side by a ring-shaped HslU homohexamer. The assembly of the HslU/HslV complex is dependent on binding of ATP.

The protein localises to the cytoplasm. The catalysed reaction is ATP-dependent cleavage of peptide bonds with broad specificity.. Allosterically activated by HslU binding. Functionally, protease subunit of a proteasome-like degradation complex believed to be a general protein degrading machinery. This is ATP-dependent protease subunit HslV from Borrelia duttonii (strain Ly).